We begin with the raw amino-acid sequence, 764 residues long: Phosphoribosylformylglycinamidine synthase subunit PurL (764 aa).

The tract at residues 1-23 (MTQEVDTVERAAATPDHPQPYRE) is disordered. The active site involves histidine 57. Residues tyrosine 60 and lysine 104 each coordinate ATP. Glutamate 106 contacts Mg(2+). Substrate contacts are provided by residues 107–110 (SHNH) and arginine 129. Histidine 108 functions as the Proton acceptor in the catalytic mechanism. Residue aspartate 130 coordinates Mg(2+). Glutamine 258 contributes to the substrate binding site. A Mg(2+)-binding site is contributed by aspartate 286. 330–332 (ESQ) serves as a coordination point for substrate. Residues asparagine 518 and glycine 555 each coordinate ATP. Mg(2+) is bound at residue asparagine 556. Serine 558 contributes to the substrate binding site.

This sequence belongs to the FGAMS family. In terms of assembly, monomer. Part of the FGAM synthase complex composed of 1 PurL, 1 PurQ and 2 PurS subunits.

It localises to the cytoplasm. It carries out the reaction N(2)-formyl-N(1)-(5-phospho-beta-D-ribosyl)glycinamide + L-glutamine + ATP + H2O = 2-formamido-N(1)-(5-O-phospho-beta-D-ribosyl)acetamidine + L-glutamate + ADP + phosphate + H(+). Its pathway is purine metabolism; IMP biosynthesis via de novo pathway; 5-amino-1-(5-phospho-D-ribosyl)imidazole from N(2)-formyl-N(1)-(5-phospho-D-ribosyl)glycinamide: step 1/2. Part of the phosphoribosylformylglycinamidine synthase complex involved in the purines biosynthetic pathway. Catalyzes the ATP-dependent conversion of formylglycinamide ribonucleotide (FGAR) and glutamine to yield formylglycinamidine ribonucleotide (FGAM) and glutamate. The FGAM synthase complex is composed of three subunits. PurQ produces an ammonia molecule by converting glutamine to glutamate. PurL transfers the ammonia molecule to FGAR to form FGAM in an ATP-dependent manner. PurS interacts with PurQ and PurL and is thought to assist in the transfer of the ammonia molecule from PurQ to PurL. The polypeptide is Phosphoribosylformylglycinamidine synthase subunit PurL (Mycolicibacterium vanbaalenii (strain DSM 7251 / JCM 13017 / BCRC 16820 / KCTC 9966 / NRRL B-24157 / PYR-1) (Mycobacterium vanbaalenii)).